We begin with the raw amino-acid sequence, 38 residues long: uncharacterized protein (38 aa).

This is an uncharacterized protein from Archaeoglobus fulgidus (strain ATCC 49558 / DSM 4304 / JCM 9628 / NBRC 100126 / VC-16).